The sequence spans 383 residues: tRNA-specific 2-thiouridylase MnmA (383 aa).

ATP-binding positions include 6–13 (AMSGGVDS) and Leu32. Cys101 acts as the Nucleophile in catalysis. A disulfide bridge connects residues Cys101 and Cys199. Gly125 serves as a coordination point for ATP. The tract at residues 148–150 (KDQ) is interaction with tRNA. Cys199 functions as the Cysteine persulfide intermediate in the catalytic mechanism.

Belongs to the MnmA/TRMU family.

The protein resides in the cytoplasm. The catalysed reaction is S-sulfanyl-L-cysteinyl-[protein] + uridine(34) in tRNA + AH2 + ATP = 2-thiouridine(34) in tRNA + L-cysteinyl-[protein] + A + AMP + diphosphate + H(+). In terms of biological role, catalyzes the 2-thiolation of uridine at the wobble position (U34) of tRNA, leading to the formation of s(2)U34. The polypeptide is tRNA-specific 2-thiouridylase MnmA (Kocuria rhizophila (strain ATCC 9341 / DSM 348 / NBRC 103217 / DC2201)).